Consider the following 336-residue polypeptide: UDP-3-O-acylglucosamine N-acyltransferase (336 aa).

Histidine 233 serves as the catalytic Proton acceptor.

Belongs to the transferase hexapeptide repeat family. LpxD subfamily. As to quaternary structure, homotrimer.

The enzyme catalyses a UDP-3-O-[(3R)-3-hydroxyacyl]-alpha-D-glucosamine + a (3R)-hydroxyacyl-[ACP] = a UDP-2-N,3-O-bis[(3R)-3-hydroxyacyl]-alpha-D-glucosamine + holo-[ACP] + H(+). Its pathway is bacterial outer membrane biogenesis; LPS lipid A biosynthesis. Catalyzes the N-acylation of UDP-3-O-acylglucosamine using 3-hydroxyacyl-ACP as the acyl donor. Is involved in the biosynthesis of lipid A, a phosphorylated glycolipid that anchors the lipopolysaccharide to the outer membrane of the cell. The polypeptide is UDP-3-O-acylglucosamine N-acyltransferase (Helicobacter pylori (strain HPAG1)).